The primary structure comprises 992 residues: UvrABC system protein A (992 aa).

Over residues 1–11 (MPKNSSTTVSS) the composition is skewed to polar residues. Residues 1 to 30 (MPKNSSTTVSSAVEAHAGGLASGPGGARSG) are disordered. 62–69 (GLSGSGKS) contributes to the ATP binding site. A C4-type; atypical zinc finger spans residues 302 to 330 (CPNGHEQTVDEIEPRSFSFNNPFGACPEC). 2 ABC transporter domains span residues 360-639 (WSLG…TRSV) and 659-988 (PEKG…RFLA). 692–699 (GVSGSGKS) serves as a coordination point for ATP. The C4-type zinc-finger motif lies at 791–817 (CEACAGDGTLKIEMNFLPDVYVPCEVC).

The protein belongs to the ABC transporter superfamily. UvrA family. As to quaternary structure, forms a heterotetramer with UvrB during the search for lesions.

The protein resides in the cytoplasm. Functionally, the UvrABC repair system catalyzes the recognition and processing of DNA lesions. UvrA is an ATPase and a DNA-binding protein. A damage recognition complex composed of 2 UvrA and 2 UvrB subunits scans DNA for abnormalities. When the presence of a lesion has been verified by UvrB, the UvrA molecules dissociate. The chain is UvrABC system protein A from Micrococcus luteus (Micrococcus lysodeikticus).